The sequence spans 327 residues: DNA-directed RNA polymerase subunit alpha (327 aa).

The alpha N-terminal domain (alpha-NTD) stretch occupies residues 1 to 233 (MQNSASEFLK…DQLSIFADLQ (233 aa)). The alpha C-terminal domain (alpha-CTD) stretch occupies residues 247–327 (IDPILLRPVD…NWPPAGLEKP (81 aa)).

This sequence belongs to the RNA polymerase alpha chain family. In terms of assembly, homodimer. The RNAP catalytic core consists of 2 alpha, 1 beta, 1 beta' and 1 omega subunit. When a sigma factor is associated with the core the holoenzyme is formed, which can initiate transcription.

It carries out the reaction RNA(n) + a ribonucleoside 5'-triphosphate = RNA(n+1) + diphosphate. Its function is as follows. DNA-dependent RNA polymerase catalyzes the transcription of DNA into RNA using the four ribonucleoside triphosphates as substrates. The chain is DNA-directed RNA polymerase subunit alpha from Chromobacterium violaceum (strain ATCC 12472 / DSM 30191 / JCM 1249 / CCUG 213 / NBRC 12614 / NCIMB 9131 / NCTC 9757 / MK).